Consider the following 1129-residue polypeptide: PAN2-PAN3 deadenylation complex catalytic subunit PAN2 (1129 aa).

WD repeat units follow at residues 20–60 (PPAV…YTSY), 104–146 (PDFK…DTLP), 148–183 (DAQY…VIKV), 186–226 (GHTG…FSLK), and 280–319 (LYDS…HFPE). The tract at residues 320-457 (YSNPTEFADH…DLHLDDVTRK (138 aa)) is linker. The segment at 396-427 (RTKRRNQIEVTRQTDRSSDSLTPPKFLSEKSR) is disordered. Positions 458 to 830 (DVPAMYGNVE…LPSVLTFQTK (373 aa)) constitute a USP domain. The Exonuclease domain maps to 880–1052 (VAIDAEFIRL…IEDATTALKL (173 aa)). A divalent metal cation-binding residues include D883, E885, D992, and D1045. Residues 1083 to 1129 (APGSGNRNSMPAGMTATGAGRDTPEPMTTPKKGGAFGGVGFRSPMRR) form a disordered region.

Belongs to the peptidase C19 family. PAN2 subfamily. Forms a heterotrimer with an asymmetric homodimer of the regulatory subunit PAN3 to form the poly(A)-nuclease (PAN) deadenylation complex. It depends on a divalent metal cation as a cofactor.

It is found in the cytoplasm. The enzyme catalyses Exonucleolytic cleavage of poly(A) to 5'-AMP.. Positively regulated by the regulatory subunit PAN3. Its function is as follows. Catalytic subunit of the poly(A)-nuclease (PAN) deadenylation complex, one of two cytoplasmic mRNA deadenylases involved in mRNA turnover. PAN specifically shortens poly(A) tails of RNA and the activity is stimulated by poly(A)-binding protein PAB1. PAN deadenylation is followed by rapid degradation of the shortened mRNA tails by the CCR4-NOT complex. Deadenylated mRNAs are then degraded by two alternative mechanisms, namely exosome-mediated 3'-5' exonucleolytic degradation, or deadenylation-dependent mRNA decaping and subsequent 5'-3' exonucleolytic degradation by XRN1. May also be involved in post-transcriptional maturation of mRNA poly(A) tails. The sequence is that of PAN2-PAN3 deadenylation complex catalytic subunit PAN2 from Phaeosphaeria nodorum (strain SN15 / ATCC MYA-4574 / FGSC 10173) (Glume blotch fungus).